We begin with the raw amino-acid sequence, 510 residues long: ATP synthase subunit alpha (510 aa).

ATP is bound at residue 170–177; that stretch reads GDRQTGKT.

Belongs to the ATPase alpha/beta chains family. F-type ATPases have 2 components, CF(1) - the catalytic core - and CF(0) - the membrane proton channel. CF(1) has five subunits: alpha(3), beta(3), gamma(1), delta(1), epsilon(1). CF(0) has three main subunits: a(1), b(2) and c(9-12). The alpha and beta chains form an alternating ring which encloses part of the gamma chain. CF(1) is attached to CF(0) by a central stalk formed by the gamma and epsilon chains, while a peripheral stalk is formed by the delta and b chains.

It is found in the cell inner membrane. The enzyme catalyses ATP + H2O + 4 H(+)(in) = ADP + phosphate + 5 H(+)(out). In terms of biological role, produces ATP from ADP in the presence of a proton gradient across the membrane. The alpha chain is a regulatory subunit. This chain is ATP synthase subunit alpha, found in Caulobacter sp. (strain K31).